A 166-amino-acid chain; its full sequence is CDP-archaeol synthase (166 aa).

The next 4 helical transmembrane spans lie at 42-62, 73-93, 103-123, and 128-148; these read LVLG…VQDA, VLSV…KSFV, AAWP…LLLI, and FAAV…TPLL.

This sequence belongs to the CDP-archaeol synthase family. Mg(2+) serves as cofactor.

The protein localises to the cell membrane. It catalyses the reaction 2,3-bis-O-(geranylgeranyl)-sn-glycerol 1-phosphate + CTP + H(+) = CDP-2,3-bis-O-(geranylgeranyl)-sn-glycerol + diphosphate. It functions in the pathway membrane lipid metabolism; glycerophospholipid metabolism. In terms of biological role, catalyzes the formation of CDP-2,3-bis-(O-geranylgeranyl)-sn-glycerol (CDP-archaeol) from 2,3-bis-(O-geranylgeranyl)-sn-glycerol 1-phosphate (DGGGP) and CTP. This reaction is the third ether-bond-formation step in the biosynthesis of archaeal membrane lipids. The protein is CDP-archaeol synthase of Methanosphaerula palustris (strain ATCC BAA-1556 / DSM 19958 / E1-9c).